A 133-amino-acid chain; its full sequence is MANHDPISDMLTRIRNASEKRHQTTRVPASRMSRSIAKVLQQEGFISEISEEGEGVLTHLVLELKYSGKHRHPTIRSMQRVSKPGLRIYKNTRALPKVLGGLGMAIISTSKGVMSDRDARKQGVGGEVLCYVY.

It belongs to the universal ribosomal protein uS8 family. In terms of assembly, part of the 30S ribosomal subunit. Contacts proteins S5 and S12.

Its function is as follows. One of the primary rRNA binding proteins, it binds directly to 16S rRNA central domain where it helps coordinate assembly of the platform of the 30S subunit. The protein is Small ribosomal subunit protein uS8 of Prochlorococcus marinus (strain MIT 9303).